Consider the following 256-residue polypeptide: MNFIDERFERLKKEGKKAFIGYVTFGYPTFEETLWFIKLVYSYVDILEIGFPFSDPIADGEIIQKASIKALSEGVKLSHLFESIEKFKKDKPVVLMLYANTVYKRGIDRFFESCKACGVDGVIIPDVSFEESFEFKEVAEKFGIVYIDLVSISSLERAKMIGRQSRGFLYCVSRKGVTGFKGQIDDRIFTFLKELKTVTSTPLAVGFGIKSKEDVQKFKDLADGIVIGSAIITKIDEGKDKLEDFLKEISESLKDK.

Active-site proton acceptor residues include E48 and D59.

Belongs to the TrpA family. In terms of assembly, tetramer of two alpha and two beta chains.

The enzyme catalyses (1S,2R)-1-C-(indol-3-yl)glycerol 3-phosphate + L-serine = D-glyceraldehyde 3-phosphate + L-tryptophan + H2O. The protein operates within amino-acid biosynthesis; L-tryptophan biosynthesis; L-tryptophan from chorismate: step 5/5. In terms of biological role, the alpha subunit is responsible for the aldol cleavage of indoleglycerol phosphate to indole and glyceraldehyde 3-phosphate. The polypeptide is Tryptophan synthase alpha chain (Caldicellulosiruptor bescii (strain ATCC BAA-1888 / DSM 6725 / KCTC 15123 / Z-1320) (Anaerocellum thermophilum)).